We begin with the raw amino-acid sequence, 386 residues long: Patatin-2-Kuras 2 (386 aa).

A signal peptide spans 1 to 23; sequence MATTKSFLILFFMILATTSSTCA. In terms of domain architecture, PNPLA spans 32 to 229; that stretch reads LSIDGGGIKG…TVGDPALLSL (198 aa). A GXGXXG motif is present at residues 36–41; that stretch reads GGGIKG. The GXSXG motif lies at 75–79; that stretch reads GTSTG. Ser77 acts as the Nucleophile in catalysis. A glycan (N-linked (GlcNAc...) asparagine) is linked at Asn115. Asp215 functions as the Proton acceptor in the catalytic mechanism. A DGA/G motif is present at residues 215-217; the sequence is DGA. Residues 321 to 384 are a coiled coil; that stretch reads ENALTGTTTE…DRKKLRANKA (64 aa).

This sequence belongs to the patatin family.

It localises to the vacuole. Functionally, probable lipolytic acyl hydrolase (LAH), an activity which is thought to be involved in the response of tubers to pathogens. This is Patatin-2-Kuras 2 (pat2-k2) from Solanum tuberosum (Potato).